Consider the following 385-residue polypeptide: uncharacterized protein (385 aa).

Zn(2+) is bound by residues aspartate 180, histidine 258, and histidine 275.

The protein belongs to the iron-containing alcohol dehydrogenase family. Zn(2+) is required as a cofactor.

This is an uncharacterized protein from Synechocystis sp. (strain ATCC 27184 / PCC 6803 / Kazusa).